The following is a 69-amino-acid chain: Beta-defensin 122 (69 aa).

Residues 1–19 form the signal peptide; it reads MKPFLVTLAVLLLFFQVTA. 3 disulfides stabilise this stretch: cysteine 26–cysteine 53, cysteine 33–cysteine 47, and cysteine 37–cysteine 54.

Belongs to the beta-defensin family.

The protein resides in the secreted. Its function is as follows. Has antibacterial activity. This Macaca mulatta (Rhesus macaque) protein is Beta-defensin 122 (DEFB122).